A 644-amino-acid chain; its full sequence is Anti-sigma-I factor RsgI3 (644 aa).

At 1–56 (MDNIGVIIKIEGNEAIVMTDDCSFKKVPIKDGMHPGQKILVPNNEVIQKENKSIKR) the chain is on the cytoplasmic side. The RsgI N-terminal anti-sigma domain occupies 3-50 (NIGVIIKIEGNEAIVMTDDCSFKKVPIKDGMHPGQKILVPNNEVIQKE). Residues 57–77 (ISAVATGIAAVFLMVLSLIWI) traverse the membrane as a helical segment. The Extracellular portion of the chain corresponds to 78-644 (NKPGRPDGIY…VVPSKNLFAD (567 aa)). The span at 302-328 (PTNTPSISTKPSATPAENPTPKLTQKP) shows a compositional bias: polar residues. Positions 302–359 (PTNTPSISTKPSATPAENPTPKLTQKPTPVPAKTGERTSTTPTPTPAPTVRNGTGSGL) are disordered. PA14 domains follow at residues 354-491 (GTGS…PSSQ) and 502-640 (KDVN…PSKN).

In terms of assembly, interacts (via RsgI N-terminal anti-sigma domain) with SigI3.

Its subcellular location is the cell membrane. Anti-sigma factor for SigI3. Negatively regulates SigI3 activity through direct interaction. Binding of the polysaccharide substrate to the extracellular C-terminal sensing domain of RsgI3 may induce a conformational change in its N-terminal cytoplasmic region, leading to the release and activation of SigI3. The protein is Anti-sigma-I factor RsgI3 of Acetivibrio thermocellus (strain ATCC 27405 / DSM 1237 / JCM 9322 / NBRC 103400 / NCIMB 10682 / NRRL B-4536 / VPI 7372) (Clostridium thermocellum).